Consider the following 100-residue polypeptide: Integration host factor subunit alpha (100 aa).

The protein belongs to the bacterial histone-like protein family. As to quaternary structure, heterodimer of an alpha and a beta chain.

This protein is one of the two subunits of integration host factor, a specific DNA-binding protein that functions in genetic recombination as well as in transcriptional and translational control. This is Integration host factor subunit alpha from Cereibacter sphaeroides (strain ATCC 17023 / DSM 158 / JCM 6121 / CCUG 31486 / LMG 2827 / NBRC 12203 / NCIMB 8253 / ATH 2.4.1.) (Rhodobacter sphaeroides).